Consider the following 108-residue polypeptide: Malonate decarboxylase acyl carrier protein (108 aa).

Residue Ser-35 is modified to O-(phosphoribosyl dephospho-coenzyme A)serine.

The protein belongs to the MdcC family. Post-translationally, covalently binds the prosthetic group of malonate decarboxylase.

Its subcellular location is the cytoplasm. Its function is as follows. Subunit of malonate decarboxylase, it is an acyl carrier protein to which acetyl and malonyl thioester residues are bound via a 2'-(5''-phosphoribosyl)-3'-dephospho-CoA prosthetic group and turn over during the catalytic mechanism. In Burkholderia cepacia (Pseudomonas cepacia), this protein is Malonate decarboxylase acyl carrier protein.